Consider the following 753-residue polypeptide: Bifunctional terpene synthase FUP1 (753 aa).

The tract at residues Met1–Trp329 is terpene cyclase. Asp96 lines the Mg(2+) pocket. A DDXXD 1 motif is present at residues Asp96 to Glu100. The short motif at Asn231–Glu239 is the NSE/DTE element. The tract at residues Lys330–Ser745 is prenyltransferase. Positions 461, 464, and 493 each coordinate isopentenyl diphosphate. Positions 500 and 504 each coordinate Mg(2+). The DDXXD 2 signature appears at Asp500–Asp504. Position 509 (Arg509) interacts with dimethylallyl diphosphate. Arg510 lines the isopentenyl diphosphate pocket. Dimethylallyl diphosphate is bound by residues Lys587, Thr588, Gln625, Asn632, Lys640, and Lys650.

This sequence in the N-terminal section; belongs to the terpene synthase family. In the C-terminal section; belongs to the FPP/GGPP synthase family. In terms of assembly, hexamer. Requires Mg(2+) as cofactor.

It carries out the reaction isopentenyl diphosphate + (2E,6E)-farnesyl diphosphate = (2E,6E,10E)-geranylgeranyl diphosphate + diphosphate. It participates in secondary metabolite biosynthesis; terpenoid biosynthesis. In terms of biological role, bifunctional terpene synthase; part of the gene cluster that mediates the biosynthesis of the mycotoxin fusaproliferin (FUP) that belongs to the class of bicyclic sesterterpenoids. The FUP biosynthetic pathway starts with the enzyme encoded by FUP1 that combines a C-terminal prenyltransferase domain responsible for the synthesis of geranylgeranyl diphosphate with the N-terminal terpene cyclase domain, to yield preterpestacin I. Preterpestacin I is then decorated by oxygenation steps that are catalyzed by two cytochrome P450 monooxygenases. First, FUP2 introduces a hydroxyl group at the C-24 position resulting in the formation of preterpestacin IIa, which can be further oxidized. The second P450 monooxygenase catalyzes the hydroxylation at C-16 and C-17 of preterpestacin IIa, producing preterpestacin III. Subsequently, the FAD-dependent oxidoreductase FUP4 catalyzes the oxidation of the hydroxy group at the C-16 position to a keto group, leading to the formation of (-)-terpestacin, which is the immediate precursor of FUP. The final step in the proposed biosynthetic pathway is the addition of an acetyl group at the C-24 position of terpestacin, which is catalyzed by the acetyltransferase FUP5. The chain is Bifunctional terpene synthase FUP1 from Fusarium proliferatum (strain ET1) (Orchid endophyte fungus).